A 626-amino-acid polypeptide reads, in one-letter code: Phosphomethylpyrimidine synthase (626 aa).

The segment at Met1–Gln22 is disordered. Positions Leu10–Gln22 are enriched in polar residues. Residues Asn232, Met261, Tyr290, His326, Ser346 to Gly348, Asp387 to Arg390, and Glu426 contribute to the substrate site. Zn(2+) is bound at residue His430. Substrate is bound at residue Tyr453. Residue His494 coordinates Zn(2+). [4Fe-4S] cluster is bound by residues Cys574, Cys577, and Cys582.

Belongs to the ThiC family. As to quaternary structure, homodimer. The cofactor is [4Fe-4S] cluster.

The catalysed reaction is 5-amino-1-(5-phospho-beta-D-ribosyl)imidazole + S-adenosyl-L-methionine = 4-amino-2-methyl-5-(phosphooxymethyl)pyrimidine + CO + 5'-deoxyadenosine + formate + L-methionine + 3 H(+). It participates in cofactor biosynthesis; thiamine diphosphate biosynthesis. In terms of biological role, catalyzes the synthesis of the hydroxymethylpyrimidine phosphate (HMP-P) moiety of thiamine from aminoimidazole ribotide (AIR) in a radical S-adenosyl-L-methionine (SAM)-dependent reaction. This Pseudomonas putida (strain GB-1) protein is Phosphomethylpyrimidine synthase.